The following is a 347-amino-acid chain: Ribosomal RNA small subunit methyltransferase C (347 aa).

It belongs to the methyltransferase superfamily. RsmC family. In terms of assembly, monomer.

The protein localises to the cytoplasm. The catalysed reaction is guanosine(1207) in 16S rRNA + S-adenosyl-L-methionine = N(2)-methylguanosine(1207) in 16S rRNA + S-adenosyl-L-homocysteine + H(+). Its function is as follows. Specifically methylates the guanine in position 1207 of 16S rRNA in the 30S particle. In Shewanella baltica (strain OS185), this protein is Ribosomal RNA small subunit methyltransferase C.